A 184-amino-acid chain; its full sequence is MISNGLILAAAEGANPLIPNPWEILVVVVGFALLMFIVIKFIVPTLEKSYQDRVEAIEGGLAKAEKAQAEANAMMADYESQLADARTEANRIREDARTEAAEIVAEARERATAEATRVFEQAQAQIAAERQQAAAQLKREVGSLATTLAGKIVGESLEDDARSQRVVDRFLADLDRHQSAGVAE.

The helical transmembrane segment at 24–44 (ILVVVVGFALLMFIVIKFIVP) threads the bilayer.

It belongs to the ATPase B chain family. As to quaternary structure, F-type ATPases have 2 components, F(1) - the catalytic core - and F(0) - the membrane proton channel. F(1) has five subunits: alpha(3), beta(3), gamma(1), delta(1), epsilon(1). F(0) has three main subunits: a(1), b(2) and c(10-14). The alpha and beta chains form an alternating ring which encloses part of the gamma chain. F(1) is attached to F(0) by a central stalk formed by the gamma and epsilon chains, while a peripheral stalk is formed by the delta and b chains.

The protein resides in the cell membrane. Functionally, f(1)F(0) ATP synthase produces ATP from ADP in the presence of a proton or sodium gradient. F-type ATPases consist of two structural domains, F(1) containing the extramembraneous catalytic core and F(0) containing the membrane proton channel, linked together by a central stalk and a peripheral stalk. During catalysis, ATP synthesis in the catalytic domain of F(1) is coupled via a rotary mechanism of the central stalk subunits to proton translocation. In terms of biological role, component of the F(0) channel, it forms part of the peripheral stalk, linking F(1) to F(0). The protein is ATP synthase subunit b (atpF) of Micrococcus luteus (strain ATCC 4698 / DSM 20030 / JCM 1464 / CCM 169 / CCUG 5858 / IAM 1056 / NBRC 3333 / NCIMB 9278 / NCTC 2665 / VKM Ac-2230) (Micrococcus lysodeikticus).